Consider the following 842-residue polypeptide: Elongation factor 2 (842 aa).

In terms of domain architecture, tr-type G spans 17 to 253 (TNVRNMSVIA…LWGDSYFNPK (237 aa)). Residues 26–33 (AHVDHGKS), 158–161 (NKVD), and 213–215 (SGL) each bind GTP. Histidine 699 is subject to Diphthamide.

It belongs to the TRAFAC class translation factor GTPase superfamily. Classic translation factor GTPase family. EF-G/EF-2 subfamily.

The protein localises to the cytoplasm. The catalysed reaction is GTP + H2O = GDP + phosphate + H(+). Its function is as follows. Catalyzes the GTP-dependent ribosomal translocation step during translation elongation. During this step, the ribosome changes from the pre-translocational (PRE) to the post-translocational (POST) state as the newly formed A-site-bound peptidyl-tRNA and P-site-bound deacylated tRNA move to the P and E sites, respectively. Catalyzes the coordinated movement of the two tRNA molecules, the mRNA and conformational changes in the ribosome. This Naumovozyma castellii (Yeast) protein is Elongation factor 2 (EFT1).